Here is a 94-residue protein sequence, read N- to C-terminus: Large ribosomal subunit protein bL28 (94 aa).

The disordered stretch occupies residues M1–S21. Positions G11–H20 are enriched in polar residues.

This sequence belongs to the bacterial ribosomal protein bL28 family.

The chain is Large ribosomal subunit protein bL28 from Leptospira borgpetersenii serovar Hardjo-bovis (strain JB197).